The sequence spans 606 residues: Kelch repeat and BTB domain-containing protein 8 (606 aa).

Residues 55-123 (TDIVVQVDHG…AYTSRVQLTE (69 aa)) form the BTB domain. The 101-residue stretch at 158 to 258 (CIGVFSFADH…PLMEETFVEQ (101 aa)) folds into the BACK domain. 5 Kelch repeats span residues 342–396 (ELYI…HCCG), 397–447 (KLYA…EYKD), 449–487 (IYIL…VYKD), 488–534 (SIYY…KLVV), and 546–593 (TQVS…FECA).

The protein belongs to the KBTBD8 family. As to quaternary structure, component of the BCR(KBTBD8) E3 ubiquitin ligase complex.

It is found in the cytoplasm. The protein localises to the cytoskeleton. It localises to the spindle. The protein resides in the golgi apparatus. Its function is as follows. Substrate-specific adapter of a BCR (BTB-CUL3-RBX1) E3 ubiquitin ligase complex that acts as a regulator of neural crest specification. The BCR(KBTBD8) complex acts by mediating monoubiquitination of target proteins. The polypeptide is Kelch repeat and BTB domain-containing protein 8 (kbtbd8) (Xenopus tropicalis (Western clawed frog)).